Here is a 1460-residue protein sequence, read N- to C-terminus: Venom prothrombin activator omicarin-C non-catalytic subunit (1460 aa).

The signal sequence occupies residues 1–30 (MGRYSVSPVPKCLLLMFLGWSGLKYYQVNA). Plastocyanin-like domains lie at 32-196 (QLRE…LLIC), 206-330 (AQKF…LNIK), 351-529 (MNWE…LLVC), and 539-685 (VQNK…FLDA). F5/8 type A domains are found at residues 32–330 (QLRE…LNIK) and 350–685 (IMNW…FLDA). 4 residues coordinate Ca(2+): Lys124, Glu139, Asp142, and Asp143. The N-linked (GlcNAc...) asparagine glycan is linked to Asn156. A disulfide bridge links Cys170 with Cys196. 5 N-linked (GlcNAc...) asparagine glycosylation sites follow: Asn242, Asn300, Asn385, Asn406, and Asn471. Residues Cys251 and Cys332 are joined by a disulfide bond. An intrachain disulfide couples Cys503 to Cys529. N-linked (GlcNAc...) asparagine glycosylation occurs at Asn557. Cystine bridges form between Cys672-Cys1031, Cys965-Cys991, Cys1147-Cys1298, and Cys1303-Cys1457. Positions 693 to 817 (GNEEEEEDDG…SDDIAGRYLR (125 aa)) are b. The segment at 740–760 (LLDDEDNPEQSRSEQTEDDEE) is disordered. Positions 772-817 (SFKGSVAEEELKHTALALEEDAHASDPRIDSNSARNSDDIAGRYLR) are cleaved as a propeptide — activation peptide (connecting region). 2 Plastocyanin-like domains span residues 823–991 (NKRR…ILIC) and 1000–1143 (NRTI…FTVI). The F5/8 type A 3 domain maps to 823–1143 (NKRRYYIAAE…RGMQALFTVI (321 aa)). Ca(2+) contacts are provided by Lys919, Phe934, Asp937, and Asp938. N-linked (GlcNAc...) asparagine glycosylation is present at Asn943. 3 N-linked (GlcNAc...) asparagine glycosylation sites follow: Asn1000, Asn1180, and Asn1397. 2 consecutive F5/8 type C domains span residues 1147-1298 (CKLP…LLGC) and 1303-1457 (CSVP…LFGC).

The protein belongs to the multicopper oxidase family. As to quaternary structure, heterodimer of a light and a heavy chains; non-disulfide-linked. The interaction between the two chains is calcium-dependent. Found in its active form associated with omicarin-C catalytic subunit (AC Q58L95). Post-translationally, in physiological conditions, blood coagulation factor V and factor Va are inactivated by activated protein C (APC) through proteolytic degradation of the heavy chain. However, omicarin-C non-catalytic subunit (factor V-like protein) retains its full activity even at high concentration of APC. This has two explanations: this protein has only one of the three cleavage sites present in factor V that are targeted by the APC for inactivation, and the binding with the catalytic subunit protect the cleavage site from inactivation. As to expression, expressed by the venom gland.

It is found in the secreted. Snake prothrombin activator that attacks the hemostatic system of prey. This non-catalytic subunit is functionally similar to blood coagulation factor V. It serves as a critical cofactor for the prothrombinase activity of the catalytic subunit, which is similar to the blood coagulation factor X. The complex converts prothrombin to thrombin by sequential cleavage at two positions, Arg-320 followed by Arg-271. Cleavage at Arg-320 produces an active intermediate known as meizothrombin. Meizothrombin is the 'second' substrate for prothrombinase, and it docks in an altered manner to present the second cleavage site (271). Cleavage at Arg-271 releases active thrombin from its pro-fragment. This order of events is reversed if the protease component of prothrombinase is used on its own, suggesting that the 271 site is inherently more accessible to proteolysis. In Oxyuranus microlepidotus (Inland taipan), this protein is Venom prothrombin activator omicarin-C non-catalytic subunit.